A 227-amino-acid polypeptide reads, in one-letter code: MASPSRQPPPGGSGLLHGSRARSYGSLVQSACSPVRERRLEHQLEPGDTLAGLALKYGVTMEQIKRANRLYTNDSIFLKKTLYIPILTEPRDLFNGLDSEEEKDGEEEVRPSNDEVWPHSTERKKQETGAGRANGEVFPTPGQETPTPIHDLSASDFLKKLDSQISLSKKAAAQKLKKGESGVPGEDAGLHLSSPRMQQRAVLGPVPLTRTSRTRTLRDQEDEIFKL.

Residues 1–11 (MASPSRQPPPG) show a composition bias toward pro residues. The disordered stretch occupies residues 1–20 (MASPSRQPPPGGSGLLHGSR). A phosphoserine mark is found at S23 and S33. Residues 40–84 (LEHQLEPGDTLAGLALKYGVTMEQIKRANRLYTNDSIFLKKTLYI) form the LysM domain. The segment at 95-150 (NGLDSEEEKDGEEEVRPSNDEVWPHSTERKKQETGAGRANGEVFPTPGQETPTPIH) is disordered. Acidic residues predominate over residues 98-107 (DSEEEKDGEE). S99 carries the post-translational modification Phosphoserine. Residues 108 to 127 (EVRPSNDEVWPHSTERKKQE) show a composition bias toward basic and acidic residues. Residues S166, S181, S194, and S212 each carry the phosphoserine modification. The segment at 172 to 196 (AAQKLKKGESGVPGEDAGLHLSSPR) is disordered.

This chain is LysM and putative peptidoglycan-binding domain-containing protein 1 (LYSMD1), found in Macaca fascicularis (Crab-eating macaque).